The chain runs to 443 residues: Glucose-6-phosphate isomerase (443 aa).

The active-site Proton donor is the Glu285. Residues His306 and Lys420 contribute to the active site.

This sequence belongs to the GPI family.

It localises to the cytoplasm. The catalysed reaction is alpha-D-glucose 6-phosphate = beta-D-fructose 6-phosphate. It functions in the pathway carbohydrate biosynthesis; gluconeogenesis. The protein operates within carbohydrate degradation; glycolysis; D-glyceraldehyde 3-phosphate and glycerone phosphate from D-glucose: step 2/4. Catalyzes the reversible isomerization of glucose-6-phosphate to fructose-6-phosphate. This is Glucose-6-phosphate isomerase from Staphylococcus saprophyticus subsp. saprophyticus (strain ATCC 15305 / DSM 20229 / NCIMB 8711 / NCTC 7292 / S-41).